A 496-amino-acid polypeptide reads, in one-letter code: Alanine aminotransferase 1 (496 aa).

Ala2 is subject to N-acetylalanine. Thr22 is modified (phosphothreonine). Lys314 carries the post-translational modification N6-(pyridoxal phosphate)lysine.

This sequence belongs to the class-I pyridoxal-phosphate-dependent aminotransferase family. Alanine aminotransferase subfamily. In terms of assembly, homodimer. Pyridoxal 5'-phosphate serves as cofactor. Mainly expressed in liver, intestine, colon and white adipose tissue.

It localises to the cytoplasm. It catalyses the reaction L-alanine + 2-oxoglutarate = pyruvate + L-glutamate. Its pathway is amino-acid degradation; L-alanine degradation via transaminase pathway; pyruvate from L-alanine: step 1/1. Functionally, catalyzes the reversible transamination between alanine and 2-oxoglutarate to form pyruvate and glutamate. Participates in cellular nitrogen metabolism and also in liver gluconeogenesis starting with precursors transported from skeletal muscles. The sequence is that of Alanine aminotransferase 1 (Gpt) from Mus musculus (Mouse).